The chain runs to 242 residues: uncharacterized protein (242 aa).

This is an uncharacterized protein from Acanthamoeba polyphaga mimivirus (APMV).